The following is a 527-amino-acid chain: Probable bifunctional methylthioribulose-1-phosphate dehydratase/enolase-phosphatase E1 (527 aa).

Residues M1–D244 form a methylthioribulose-1-phosphate dehydratase region. Position 116 (C116) interacts with substrate. Residues H134 and H136 each contribute to the Zn(2+) site. The active-site Proton donor/acceptor; for methylthioribulose-1-phosphate dehydratase activity is E159. Zn(2+) is bound at residue H209. Residues I288 to I527 are enolase-phosphatase E1. Mg(2+) contacts are provided by D291 and E293. Residues S426–S427 and K460 each bind substrate. D486 lines the Mg(2+) pocket.

It in the N-terminal section; belongs to the aldolase class II family. MtnB subfamily. In the C-terminal section; belongs to the HAD-like hydrolase superfamily. MasA/MtnC family. Requires Zn(2+) as cofactor. The cofactor is Mg(2+).

The catalysed reaction is 5-(methylsulfanyl)-D-ribulose 1-phosphate = 5-methylsulfanyl-2,3-dioxopentyl phosphate + H2O. The enzyme catalyses 5-methylsulfanyl-2,3-dioxopentyl phosphate + H2O = 1,2-dihydroxy-5-(methylsulfanyl)pent-1-en-3-one + phosphate. It participates in amino-acid biosynthesis; L-methionine biosynthesis via salvage pathway; L-methionine from S-methyl-5-thio-alpha-D-ribose 1-phosphate: step 2/6. It functions in the pathway amino-acid biosynthesis; L-methionine biosynthesis via salvage pathway; L-methionine from S-methyl-5-thio-alpha-D-ribose 1-phosphate: step 3/6. The protein operates within amino-acid biosynthesis; L-methionine biosynthesis via salvage pathway; L-methionine from S-methyl-5-thio-alpha-D-ribose 1-phosphate: step 4/6. The sequence is that of Probable bifunctional methylthioribulose-1-phosphate dehydratase/enolase-phosphatase E1 from Ricinus communis (Castor bean).